The following is a 74-amino-acid chain: Large ribosomal subunit protein bL31 (74 aa).

Zn(2+) is bound by residues Cys-16, Cys-18, Cys-38, and Cys-41.

This sequence belongs to the bacterial ribosomal protein bL31 family. Type A subfamily. In terms of assembly, part of the 50S ribosomal subunit. Zn(2+) serves as cofactor.

Its function is as follows. Binds the 23S rRNA. In Salinispora tropica (strain ATCC BAA-916 / DSM 44818 / JCM 13857 / NBRC 105044 / CNB-440), this protein is Large ribosomal subunit protein bL31.